We begin with the raw amino-acid sequence, 168 residues long: Pleiotrophin (168 aa).

A signal peptide spans 1–32 (MSSQQYQQQRRKFAAAFLALIFILAAVDTAEA). 5 disulfide bridges follow: Cys-47-Cys-76, Cys-55-Cys-85, Cys-62-Cys-89, Cys-99-Cys-131, and Cys-109-Cys-141. Chondroitin sulfate binding stretches follow at residues 92–99 (KKQFGAEC) and 123–131 (KRALHNADC). The disordered stretch occupies residues 139–168 (KPCGKLTKPKPQAESKKKKKEGKKQEKMLD). The interval 147–168 (PKPQAESKKKKKEGKKQEKMLD) is chondroitin sulfate A binding.

Belongs to the pleiotrophin family. Interacts with ALK and NEK6. Interacts with PTPRZ1 (via chondroitin sulfate groups); promotes formation of homooligomers; oligomerization impairs tyrosine phosphatase activity. Forms a complex with PTPRZ1 and CTNNB1; this complex inactivates PTPRZ1 protein tyrosine phosphatase activity through PTN interaction and stimulates tyrosine phosphorylation of CTNNB1. Interacts with ITGB3 and ITGA5. Forms a complex with PTPRZ1 and integrin alpha-V/beta-3 (ITGAV:ITGB3) that stimulates endothelial cell migration through ITGB3 'Tyr-773' phosphorylation. Interacts with SDC3 (via heparan sulfate chains); this interaction mediates the neurite outgrowth-promoting signal from PTN to the cytoskeleton of growing neurites; this interaction mediates osteoblast recruitment. Interacts with GPC2 (via heparan sulfate); this interaction promotes neurite outgrowth through binding of PTN with chondroitin sulfate of proteoglycans, thereby releasing PTPRS of chondroitin sulfate proteoglycans (CSPGs) and leading to binding with heparan sulfate of GPC2. Post-translationally, phosphorylated by NEK6. As to expression, osteoblast and brain. Expressed in the follicular epithelium and granulosa cells of the ovary. Strongly expressed in the uterus of newborn mice, and the degree of expression decreased in one-week-old mice, although the expression continues even in the uteri of adult mice. Expression gradually increases from proestrus to estrus, then decreases sharply, and thereafter gradually increased again. strongly expressed in the cochlea of WT mice 1 week after birth, and then the expression decreased and was undetectable by week 8 after birth. Expressed around the cell soma of osteocytes and apparently captured in the unmineralized interstitial matrix surrounding the cells. Furthermore distributed throughout the intraosseous canalicular porosity, being localized in the unmineralized matrix around the cell processes. Strongly expressed in the innermost layer of the periosteum.

The protein resides in the secreted. Functionally, secreted growth factor that mediates its signal through cell-surface proteoglycan and non-proteoglycan receptors. Binds cell-surface proteoglycan receptor via their chondroitin sulfate (CS) groups. Thereby regulates many processes like cell proliferation, cell survival, cell growth, cell differentiation and cell migration in several tissues namely neuron and bone. Also plays a role in synaptic plasticity and learning-related behavior by inhibiting long-term synaptic potentiation. Binds PTPRZ1, leading to neutralization of the negative charges of the CS chains of PTPRZ1, inducing PTPRZ1 clustering, thereby causing the dimerization and inactivation of its phosphatase activity leading to increased tyrosine phosphorylation of each of the PTPRZ1 substrates like ALK or AFAP1L2 in order to activate the PI3K-AKT pathway. Through PTPRZ1 binding controls oligodendrocyte precursor cell differentiation by enhancing the phosphorylation of AFAP1L2 in order to activate the PI3K-AKT pathway. Forms a complex with PTPRZ1 and integrin alpha-V/beta-3 (ITGAV:ITGB3) that stimulates endothelial cell migration through SRC dephosphorylation and activation that consequently leads to ITGB3 'Tyr-773' phosphorylation. In adult hippocampus promotes dendritic arborization, spine development, and functional integration and connectivity of newborn granule neurons through ALK by activating AKT signaling pathway. Binds GPC2 and chondroitin sulfate proteoglycans (CSPGs) at the neuron surface, leading to abrogation of binding between PTPRS and CSPGs and neurite outgrowth promotion. Binds SDC3 and mediates bone formation by recruiting and attaching osteoblasts/osteoblast precursors to the sites for new bone deposition. Binds ALK and promotes cell survival and cell proliferation through MAPK pathway activation. Inhibits proliferation and enhances differentiation of neural stem cells by inhibiting FGF2-induced fibroblast growth factor receptor signaling pathway. Mediates regulatory mechanisms in normal hemostasis and in hematopoietic regeneration and in maintaining the balance of myeloid and lymphoid regeneration. In addition may play a role in the female reproductive system, auditory response and the progesterone-induced decidualization pathway. This is Pleiotrophin from Mus musculus (Mouse).